We begin with the raw amino-acid sequence, 79 residues long: Raniseptin-9 (79 aa).

Positions 1 to 22 (MAFLKKSLFLVLFLGIVSLSIC) are cleaved as a signal peptide. The propeptide occupies 23 to 49 (EEEKREGEEEEKQEEENEELSEEELRE). Residues 27 to 46 (REGEEEEKQEEENEELSEEE) form a disordered region. The span at 30–44 (EEEEKQEEENEELSE) shows a compositional bias: acidic residues.

The protein belongs to the frog skin active peptide (FSAP) family. Dermaseptin subfamily. In terms of tissue distribution, expressed by the skin glands.

It is found in the secreted. Has antibacterial activity. The polypeptide is Raniseptin-9 (Boana raniceps (Chaco tree frog)).